A 65-amino-acid chain; its full sequence is Double gene block protein 1 (65 aa).

Residues 1-41 (MDSQRTVELTNPRGRSKERGDSGGKQKNSMGRKIANDAISE) are disordered. Residues 15 to 24 (RSKERGDSGG) are compositionally biased toward basic and acidic residues. An RNA-binding region spans residues 17-43 (KERGDSGGKQKNSMGRKIANDAISESK).

It belongs to the carmovirus double gene block protein 1 family. Homodimer.

Functionally, cell-to-cell movement. Displays RNA-binding activity. This chain is Double gene block protein 1, found in Melon necrotic spot virus (MNSV).